The primary structure comprises 221 residues: Small ribosomal subunit protein uS3 (221 aa).

One can recognise a KH type-2 domain in the interval 39–107; sequence LRKFLKDKLK…EVFLSIQEVR (69 aa).

The protein belongs to the universal ribosomal protein uS3 family. Part of the 30S ribosomal subunit. Forms a tight complex with proteins S10 and S14.

Binds the lower part of the 30S subunit head. Binds mRNA in the 70S ribosome, positioning it for translation. This chain is Small ribosomal subunit protein uS3, found in Bdellovibrio bacteriovorus (strain ATCC 15356 / DSM 50701 / NCIMB 9529 / HD100).